The primary structure comprises 240 residues: Octanoyltransferase (240 aa).

The region spanning 49–233 is the BPL/LPL catalytic domain; the sequence is GEAPELVWLL…AFESVFGATR (185 aa). Substrate contacts are provided by residues 87–94, 162–164, and 175–177; these read RGGQVTYH, AIG, and GIA. The active-site Acyl-thioester intermediate is the cysteine 193.

The protein belongs to the LipB family.

The protein localises to the cytoplasm. It catalyses the reaction octanoyl-[ACP] + L-lysyl-[protein] = N(6)-octanoyl-L-lysyl-[protein] + holo-[ACP] + H(+). It functions in the pathway protein modification; protein lipoylation via endogenous pathway; protein N(6)-(lipoyl)lysine from octanoyl-[acyl-carrier-protein]: step 1/2. Functionally, catalyzes the transfer of endogenously produced octanoic acid from octanoyl-acyl-carrier-protein onto the lipoyl domains of lipoate-dependent enzymes. Lipoyl-ACP can also act as a substrate although octanoyl-ACP is likely to be the physiological substrate. The chain is Octanoyltransferase from Bradyrhizobium sp. (strain BTAi1 / ATCC BAA-1182).